We begin with the raw amino-acid sequence, 467 residues long: UDP-N-acetylmuramate--L-alanine ligase (467 aa).

114–120 (GTHGKTT) is an ATP binding site.

This sequence belongs to the MurCDEF family.

It is found in the cytoplasm. It carries out the reaction UDP-N-acetyl-alpha-D-muramate + L-alanine + ATP = UDP-N-acetyl-alpha-D-muramoyl-L-alanine + ADP + phosphate + H(+). It participates in cell wall biogenesis; peptidoglycan biosynthesis. Functionally, cell wall formation. The chain is UDP-N-acetylmuramate--L-alanine ligase from Rhodopseudomonas palustris (strain BisA53).